Here is a 494-residue protein sequence, read N- to C-terminus: Splicing regulatory glutamine/lysine-rich protein 1 (494 aa).

An RRM domain is found at R69–N145. A phosphoserine mark is found at S174 and S187. A disordered region spans residues I176 to V494. Positions E183 to G192 are enriched in basic and acidic residues. Basic residues predominate over residues G193–D262. Positions K263–R340 are enriched in basic and acidic residues. T348 carries the post-translational modification Phosphothreonine. The span at R357–S373 shows a compositional bias: basic residues. Basic and acidic residues predominate over residues R404–V474. Residues H476–S486 are compositionally biased toward polar residues. Residue K490 forms a Glycyl lysine isopeptide (Lys-Gly) (interchain with G-Cter in SUMO2) linkage.

The protein belongs to the splicing factor SR family. As to quaternary structure, homodimer. Binds SFRS1, SFRS2, SFRS3 and SFRS6. Interacts with the spliceosome. Interacts with SREK1IP1.

It is found in the nucleus. Participates in the regulation of alternative splicing by modulating the activity of other splice facors. Inhibits the splicing activity of SFRS1, SFRS2 and SFRS6. Augments the splicing activity of SFRS3. This Mus musculus (Mouse) protein is Splicing regulatory glutamine/lysine-rich protein 1 (Srek1).